A 208-amino-acid chain; its full sequence is Protein GrpE (208 aa).

The segment at 1 to 62 (MTEKDESVKS…ETAVDPKDEE (62 aa)) is disordered. Residues 46 to 55 (SNEESSEETA) show a composition bias toward acidic residues.

Belongs to the GrpE family. In terms of assembly, homodimer.

It localises to the cytoplasm. Participates actively in the response to hyperosmotic and heat shock by preventing the aggregation of stress-denatured proteins, in association with DnaK and GrpE. It is the nucleotide exchange factor for DnaK and may function as a thermosensor. Unfolded proteins bind initially to DnaJ; upon interaction with the DnaJ-bound protein, DnaK hydrolyzes its bound ATP, resulting in the formation of a stable complex. GrpE releases ADP from DnaK; ATP binding to DnaK triggers the release of the substrate protein, thus completing the reaction cycle. Several rounds of ATP-dependent interactions between DnaJ, DnaK and GrpE are required for fully efficient folding. In Staphylococcus haemolyticus (strain JCSC1435), this protein is Protein GrpE.